The sequence spans 388 residues: Homeobox protein XHOX-3 (388 aa).

2 disordered regions span residues 30 to 109 (AVGS…SDFY) and 131 to 163 (SAGQ…FSAC). 2 stretches are compositionally biased toward polar residues: residues 68 to 81 (ATGQ…QLRI) and 91 to 103 (DSLS…SSSD). Residues 168-227 (MRRYRTAFTREQIARLEKEFYRENYVSRPRRCELAAALNLPETTIKVWFQNRRMKDKRQR) constitute a DNA-binding region (homeobox).

It belongs to the even-skipped homeobox family.

Its subcellular location is the nucleus. In terms of biological role, may be required for posterior development and development of normal embryonic axial pattern. This Xenopus laevis (African clawed frog) protein is Homeobox protein XHOX-3 (xhox3).